We begin with the raw amino-acid sequence, 465 residues long: Probable dipeptidase A (465 aa).

The active site involves Cys3.

Belongs to the peptidase C69 family.

The catalysed reaction is an L-aminoacyl-L-amino acid + H2O = 2 an L-alpha-amino acid. The protein is Probable dipeptidase A (pepDA) of Streptococcus pyogenes serotype M3 (strain SSI-1).